A 142-amino-acid chain; its full sequence is Hemoglobin subunit alpha (142 aa).

One can recognise a Globin domain in the interval Val-2–Arg-142. Ser-4 carries the post-translational modification Phosphoserine. N6-succinyllysine is present on Lys-8. At Thr-9 the chain carries Phosphothreonine. An N6-succinyllysine modification is found at Lys-12. Lys-17 carries the post-translational modification N6-acetyllysine; alternate. Residue Lys-17 is modified to N6-succinyllysine; alternate. Position 25 is a phosphotyrosine (Tyr-25). Phosphoserine is present on Ser-36. Lys-41 carries the post-translational modification N6-succinyllysine. Ser-50 carries the post-translational modification Phosphoserine. O2 is bound at residue His-59. Position 88 (His-88) interacts with heme b. Phosphoserine is present on Ser-103. Thr-109 is subject to Phosphothreonine. Ser-125 carries the phosphoserine modification. Phosphothreonine is present on residues Thr-135 and Thr-138. The residue at position 139 (Ser-139) is a Phosphoserine.

Belongs to the globin family. As to quaternary structure, heterotetramer of two alpha chains and two beta chains. In terms of tissue distribution, red blood cells.

In terms of biological role, involved in oxygen transport from the lung to the various peripheral tissues. Hemopressin acts as an antagonist peptide of the cannabinoid receptor CNR1. Hemopressin-binding efficiently blocks cannabinoid receptor CNR1 and subsequent signaling. The chain is Hemoglobin subunit alpha (HBA) from Canis latrans (Coyote).